We begin with the raw amino-acid sequence, 390 residues long: Phosphopentomutase (390 aa).

The Mn(2+) site is built by D11, D283, H288, D324, H325, and H336.

The protein belongs to the phosphopentomutase family. Requires Mn(2+) as cofactor.

It localises to the cytoplasm. It catalyses the reaction 2-deoxy-alpha-D-ribose 1-phosphate = 2-deoxy-D-ribose 5-phosphate. The enzyme catalyses alpha-D-ribose 1-phosphate = D-ribose 5-phosphate. Its pathway is carbohydrate degradation; 2-deoxy-D-ribose 1-phosphate degradation; D-glyceraldehyde 3-phosphate and acetaldehyde from 2-deoxy-alpha-D-ribose 1-phosphate: step 1/2. Its function is as follows. Isomerase that catalyzes the conversion of deoxy-ribose 1-phosphate (dRib-1-P) and ribose 1-phosphate (Rib-1-P) to deoxy-ribose 5-phosphate (dRib-5-P) and ribose 5-phosphate (Rib-5-P), respectively. The protein is Phosphopentomutase of Clostridium novyi (strain NT).